The following is a 248-amino-acid chain: NADP-dependent 3-hydroxy acid dehydrogenase YdfG (248 aa).

NADP(+)-binding positions include 7–12, 32–33, 54–55, and Asn-81; these read GATAGF, RR, and DV. Ser-134 contributes to the substrate binding site. Residues Tyr-147, Lys-151, and 177 to 185 contribute to the NADP(+) site; that span reads PGLVGGTEF. Tyr-147 (proton acceptor) is an active-site residue.

It belongs to the short-chain dehydrogenases/reductases (SDR) family. In terms of assembly, homotetramer.

It carries out the reaction 3-hydroxypropanoate + NADP(+) = 3-oxopropanoate + NADPH + H(+). The enzyme catalyses L-allo-threonine + NADP(+) = aminoacetone + CO2 + NADPH. Its function is as follows. NADP-dependent dehydrogenase with broad substrate specificity acting on 3-hydroxy acids. Catalyzes the NADP-dependent oxidation of L-allo-threonine to L-2-amino-3-keto-butyrate, which is spontaneously decarboxylated into aminoacetone. Also acts on D-threonine, L-serine, D-serine, D-3-hydroxyisobutyrate, L-3-hydroxyisobutyrate, D-glycerate and L-glycerate. Able to catalyze the reduction of the malonic semialdehyde to 3-hydroxypropionic acid. YdfG is apparently supplementing RutE, the presumed malonic semialdehyde reductase involved in pyrimidine degradation since both are able to detoxify malonic semialdehyde. This chain is NADP-dependent 3-hydroxy acid dehydrogenase YdfG, found in Escherichia coli O6:H1 (strain CFT073 / ATCC 700928 / UPEC).